The chain runs to 351 residues: DNA polymerase IV (351 aa).

Positions 4 to 185 constitute a UmuC domain; that stretch reads IIHVDMDCFY…LPLGKIPGVG (182 aa). Positions 8 and 103 each coordinate Mg(2+). Glu104 is a catalytic residue.

The protein belongs to the DNA polymerase type-Y family. In terms of assembly, monomer. Mg(2+) is required as a cofactor.

It is found in the cytoplasm. It carries out the reaction DNA(n) + a 2'-deoxyribonucleoside 5'-triphosphate = DNA(n+1) + diphosphate. In terms of biological role, poorly processive, error-prone DNA polymerase involved in untargeted mutagenesis. Copies undamaged DNA at stalled replication forks, which arise in vivo from mismatched or misaligned primer ends. These misaligned primers can be extended by PolIV. Exhibits no 3'-5' exonuclease (proofreading) activity. May be involved in translesional synthesis, in conjunction with the beta clamp from PolIII. The chain is DNA polymerase IV from Citrobacter koseri (strain ATCC BAA-895 / CDC 4225-83 / SGSC4696).